A 342-amino-acid chain; its full sequence is Uroporphyrinogen decarboxylase (342 aa).

Residues 21-25 (RQAGR), Asp71, Tyr148, Ser203, and His316 each bind substrate.

Belongs to the uroporphyrinogen decarboxylase family. In terms of assembly, homodimer.

It localises to the cytoplasm. The enzyme catalyses uroporphyrinogen III + 4 H(+) = coproporphyrinogen III + 4 CO2. The protein operates within porphyrin-containing compound metabolism; protoporphyrin-IX biosynthesis; coproporphyrinogen-III from 5-aminolevulinate: step 4/4. Catalyzes the decarboxylation of four acetate groups of uroporphyrinogen-III to yield coproporphyrinogen-III. The sequence is that of Uroporphyrinogen decarboxylase from Campylobacter curvus (strain 525.92).